We begin with the raw amino-acid sequence, 440 residues long: MVQQTNNAENTEALLAGESSDSGAGLELGIASSPTPGSTASTGGKADDPSWCKTPSGHIKRPMNAFMVWSQIERRKIMEQSPDMHNAEISKRLGKRWKLLKDSDKIPFIQEAERLRLKHMADYPDYKYRPRKKVKSGNAGAGSAATAKPGEKGDKVAGSSGHAGSSHAGGGAGGSSKPAPKKSCGPKVAGSSVGKPHAKLVPAGGSKAAASFSPEQAALLPLGEPTAVYKVRTPSAATPAASSSPSSALATPAKHPADKKVKRVYLFGSLGASASPVGGLGASADPSDPLGLYEDGGPGCSPDGRSLSGRSSAASSPAASRSPADHRGYASLRAASPAPSSAPSHASSSLSSSSSSSSGSSSSDDEFEDDLLDLNPSSNFESMSLGSFSSSSALDRDLDFNFEPGSGSHFEFPDYCTPEVSEMISGDWLESSISNLVFTY.

Over residues 1–10 (MVQQTNNAEN) the composition is skewed to polar residues. Residues 1–58 (MVQQTNNAENTEALLAGESSDSGAGLELGIASSPTPGSTASTGGKADDPSWCKTPSGH) form a disordered region. Residues 31–44 (ASSPTPGSTASTGG) show a composition bias toward low complexity. A DNA-binding region (HMG box) is located at residues 59-127 (IKRPMNAFMV…KHMADYPDYK (69 aa)). At Lys-95 the chain carries N6-acetyllysine. Disordered regions lie at residues 128 to 211 (YRPR…AAAS), 234 to 258 (PSAA…HPAD), and 272 to 382 (ASAS…NFES). Low complexity-rich tracts occupy residues 136-148 (SGNA…ATAK), 157-166 (AGSSGHAGSS), 234-253 (PSAA…ATPA), 304-322 (GRSL…ASRS), and 330-362 (ASLR…GSSS). A compositionally biased stretch (acidic residues) spans 363–372 (SDDEFEDDLL). Positions 373 to 382 (DLNPSSNFES) are enriched in low complexity. The short motif at 392 to 400 (SALDRDLDF) is the 9aaTAD element.

Interacts with UBE2I. Interacts with HDAC1; interaction inhibits the transcriptional activator activity. In terms of processing, acetylation at Lys-95 by KAT5 promotes the transcription activator activity and is required during myoblast differentiation. Acetylation by KAT5 abolishes the interaction between SOX4 and HDAC1 and switches SOX4 into a transcriptional activator. As to expression, expressed in both gamma-delta T-cells and Cd4+ Cd8+ double-positive (DP) alpha-beta T-cells. Expressed in the ovaries and the thymus.

Its subcellular location is the nucleus. Functionally, transcriptional activator that binds with high affinity to the T-cell enhancer motif 5'-AACAAAG-3' motif. Required for IL17A-producing Vgamma2-positive gamma-delta T-cell maturation and development, via binding to regulator loci of RORC to modulate expression. Involved in skeletal myoblast differentiation by promoting gene expression of CALD1. The protein is Transcription factor SOX-4 of Mus musculus (Mouse).